The following is a 349-amino-acid chain: UPF0284 protein MM_0708 (349 aa).

The protein belongs to the UPF0284 family.

The protein is UPF0284 protein MM_0708 of Methanosarcina mazei (strain ATCC BAA-159 / DSM 3647 / Goe1 / Go1 / JCM 11833 / OCM 88) (Methanosarcina frisia).